The primary structure comprises 257 residues: ADP-dependent (S)-NAD(P)H-hydrate dehydratase (257 aa).

Residues 1-257 (MGRLQRTLSN…VIERIPDTIR (257 aa)) enclose the YjeF C-terminal domain. G200 provides a ligand contact to AMP. D201 contributes to the (6S)-NADPHX binding site.

It belongs to the NnrD/CARKD family. In terms of assembly, homotetramer. The cofactor is Mg(2+).

It carries out the reaction (6S)-NADHX + ADP = AMP + phosphate + NADH + H(+). The catalysed reaction is (6S)-NADPHX + ADP = AMP + phosphate + NADPH + H(+). Functionally, catalyzes the dehydration of the S-form of NAD(P)HX at the expense of ADP, which is converted to AMP. Together with NAD(P)HX epimerase, which catalyzes the epimerization of the S- and R-forms, the enzyme allows the repair of both epimers of NAD(P)HX, a damaged form of NAD(P)H that is a result of enzymatic or heat-dependent hydration. The chain is ADP-dependent (S)-NAD(P)H-hydrate dehydratase from Haloterrigena turkmenica (strain ATCC 51198 / DSM 5511 / JCM 9101 / NCIMB 13204 / VKM B-1734 / 4k) (Halococcus turkmenicus).